The following is a 150-amino-acid chain: Heavy metal-associated isoprenylated plant protein 24 (150 aa).

Residues 26–89 (QTVALRVARI…AAKSTKKKVE (64 aa)) enclose the HMA domain. 2 residues coordinate a metal cation: Cys37 and Cys40. At Cys147 the chain carries Cysteine methyl ester. Residue Cys147 is the site of S-farnesyl cysteine attachment. Residues 148 to 150 (AIM) constitute a propeptide, removed in mature form.

Belongs to the HIPP family. As to quaternary structure, interacts with ZHD11/HB29.

Its function is as follows. Heavy-metal-binding protein. This is Heavy metal-associated isoprenylated plant protein 24 from Arabidopsis thaliana (Mouse-ear cress).